The chain runs to 540 residues: GMP synthase [glutamine-hydrolyzing] (540 aa).

A Glutamine amidotransferase type-1 domain is found at 26–216 (IIIILDFGSQ…VYHICECEPT (191 aa)). Residue C103 is the Nucleophile of the active site. Catalysis depends on residues H190 and E192. A GMPS ATP-PPase domain is found at 217-415 (WTTAAFVEEA…VGLPEEIVQR (199 aa)). Position 244 to 250 (244 to 250 (SGGVDSS)) interacts with ATP.

In terms of assembly, homodimer.

The enzyme catalyses XMP + L-glutamine + ATP + H2O = GMP + L-glutamate + AMP + diphosphate + 2 H(+). Its pathway is purine metabolism; GMP biosynthesis; GMP from XMP (L-Gln route): step 1/1. Functionally, catalyzes the synthesis of GMP from XMP. The chain is GMP synthase [glutamine-hydrolyzing] from Nostoc sp. (strain PCC 7120 / SAG 25.82 / UTEX 2576).